We begin with the raw amino-acid sequence, 212 residues long: 2-dehydro-3-deoxy-phosphogluconate aldolase (212 aa).

The active-site Proton acceptor is E45. Residues R49, T73, and K133 each coordinate pyruvate. The active-site Schiff-base intermediate with substrate is the K133.

This sequence belongs to the KHG/KDPG aldolase family. Homotrimer.

It is found in the cytoplasm. It carries out the reaction 2-dehydro-3-deoxy-6-phospho-D-gluconate = D-glyceraldehyde 3-phosphate + pyruvate. It functions in the pathway carbohydrate acid metabolism; 2-dehydro-3-deoxy-D-gluconate degradation; D-glyceraldehyde 3-phosphate and pyruvate from 2-dehydro-3-deoxy-D-gluconate: step 2/2. Functionally, involved in the degradation of glucose via the Entner-Doudoroff pathway. Catalyzes the reversible, stereospecific retro-aldol cleavage of 2-keto-3-deoxy-6-phosphogluconate (KDPG) to pyruvate and D-glyceraldehyde-3-phosphate. In Haemophilus influenzae (strain ATCC 51907 / DSM 11121 / KW20 / Rd), this protein is 2-dehydro-3-deoxy-phosphogluconate aldolase (eda).